Consider the following 361-residue polypeptide: dTDP-glucose 4,6-dehydratase (361 aa).

Residues 11-12 (FI), 32-35 (DKLT), 58-59 (DI), 80-84 (LAAES), and threonine 99 contribute to the NAD(+) site. Substrate is bound at residue serine 84. Threonine 133 provides a ligand contact to substrate. Aspartate 134 acts as the Proton donor in catalysis. Active-site proton acceptor residues include glutamate 135 and tyrosine 167. 167 to 171 (YSASK) lines the NAD(+) pocket. Asparagine 196 is a substrate binding site. Position 197 (asparagine 197) interacts with NAD(+). Residues 206–207 (KL), 222–224 (PIY), arginine 231, asparagine 266, and 296–300 (DRPGH) contribute to the substrate site.

The protein belongs to the NAD(P)-dependent epimerase/dehydratase family. dTDP-glucose dehydratase subfamily. As to quaternary structure, homodimer. It depends on NAD(+) as a cofactor.

It catalyses the reaction dTDP-alpha-D-glucose = dTDP-4-dehydro-6-deoxy-alpha-D-glucose + H2O. It functions in the pathway carbohydrate biosynthesis; dTDP-L-rhamnose biosynthesis. It participates in bacterial outer membrane biogenesis; LPS O-antigen biosynthesis. Catalyzes the dehydration of dTDP-D-glucose to form dTDP-6-deoxy-D-xylo-4-hexulose via a three-step process involving oxidation, dehydration and reduction. The sequence is that of dTDP-glucose 4,6-dehydratase (rfbB) from Escherichia coli.